A 208-amino-acid polypeptide reads, in one-letter code: MGRVIRDFFTQPTLVVAESLLGKILVHKPRKGFCYKGMIVETEAYLGNGDDACHASRKMTPRNSVMFRNPGTIYVYFTYGAHNLLNIVTEPEGTAGAVLIRAMEPVEGIELMKKNRKTDKVINLMNGPGKLTQAMEISLQQNGSSLHDTTLYLEEGTTIAGSCIETTPRVGISKSTDLLWRKYISDNPYVSKASPLPPTKKKRIVLES.

Belongs to the DNA glycosylase MPG family.

The sequence is that of Putative 3-methyladenine DNA glycosylase from Prosthecochloris aestuarii (strain DSM 271 / SK 413).